The primary structure comprises 161 residues: Large ribosomal subunit protein uL16 (161 aa).

This sequence belongs to the universal ribosomal protein uL16 family.

The protein is Large ribosomal subunit protein uL16 of Methanosphaera stadtmanae (strain ATCC 43021 / DSM 3091 / JCM 11832 / MCB-3).